A 321-amino-acid polypeptide reads, in one-letter code: NADH-quinone oxidoreductase subunit H (321 aa).

The next 8 helical transmembrane spans lie at 9-29 (LLAI…GAYM), 78-98 (IIFT…FAIM), 111-131 (IGIL…LLGG), 156-176 (FLGL…ISTI), 183-203 (IWNI…GLAI), 234-254 (FFIG…TLFF), 262-282 (LPPY…FILI), and 296-316 (ILGW…TAIV).

The protein belongs to the complex I subunit 1 family. NDH-1 is composed of 14 different subunits. Subunits NuoA, H, J, K, L, M, N constitute the membrane sector of the complex.

It is found in the cell membrane. It carries out the reaction a quinone + NADH + 5 H(+)(in) = a quinol + NAD(+) + 4 H(+)(out). Functionally, NDH-1 shuttles electrons from NADH, via FMN and iron-sulfur (Fe-S) centers, to quinones in the respiratory chain. The immediate electron acceptor for the enzyme in this species is believed to be ubiquinone. Couples the redox reaction to proton translocation (for every two electrons transferred, four hydrogen ions are translocated across the cytoplasmic membrane), and thus conserves the redox energy in a proton gradient. This subunit may bind ubiquinone. The polypeptide is NADH-quinone oxidoreductase subunit H (Baumannia cicadellinicola subsp. Homalodisca coagulata).